The sequence spans 963 residues: MHC class II regulatory factor RFX1 (963 aa).

Disordered regions lie at residues 1-88 (MATQ…APSP), 105-126 (ASET…VPTQ), 174-218 (QSPA…GTPA), and 361-392 (SSSE…GSSG). The span at 20 to 41 (PQAPPQALPQPPPPAAPQPPAA) shows a compositional bias: pro residues. Residues 42–67 (ATPQPQYVTELQSPQPQTQPPGSQKQ) are compositionally biased toward low complexity. Residue Ser54 is modified to Phosphoserine. The span at 75–87 (APAPSQPATPAPS) shows a compositional bias: pro residues. 3 stretches are compositionally biased toward polar residues: residues 107-119 (ETVS…STAS), 181-196 (KSGQ…QQVH), and 204-214 (VQANNSTSKTA). Low complexity predominate over residues 361 to 372 (SSSEAGASNSSV). Residues 373 to 392 (GAGGNGGGGSSGGGSGGSSG) are compositionally biased toward gly residues. Residues 423 to 498 (TVQWLLDNYE…YHYYGLRIKA (76 aa)) constitute a DNA-binding region (RFX-type winged-helix). The disordered stretch occupies residues 899–948 (SLNPLDPDKDEEEEEEEESEDELPQDISLAAGSESPALGPEALEPPAKLA). The span at 906-922 (DKDEEEEEEEESEDELP) shows a compositional bias: acidic residues. Over residues 932–947 (ESPALGPEALEPPAKL) the composition is skewed to low complexity. A phosphoserine mark is found at Ser962 and Ser963.

It belongs to the RFX family. As to quaternary structure, homodimer; binds DNA as a homodimer. Heterodimer; heterodimerizes with RFX2 and RFX3.

Its subcellular location is the nucleus. Regulatory factor essential for MHC class II genes expression. Binds to the X boxes of MHC class II genes. In Mus musculus (Mouse), this protein is MHC class II regulatory factor RFX1 (Rfx1).